Here is a 645-residue protein sequence, read N- to C-terminus: Glucans biosynthesis glucosyltransferase H (645 aa).

Residues 1-12 (MDGTVTLSSTPT) are compositionally biased toward polar residues. The tract at residues 1 to 22 (MDGTVTLSSTPTAIPPVSALDA) is disordered. Helical transmembrane passes span 64 to 84 (LIGG…SVLW), 98 to 118 (LFTL…AGFV), 423 to 443 (APMW…GVGI), 465 to 485 (AIWI…LGYI), 504 to 524 (AVSI…VMYL), 559 to 579 (YGGL…VSPA), and 580 to 600 (LAAW…VVAL).

This sequence belongs to the glycosyltransferase 2 family. OpgH subfamily.

It is found in the cell inner membrane. The protein operates within glycan metabolism; osmoregulated periplasmic glucan (OPG) biosynthesis. Functionally, involved in the biosynthesis of osmoregulated periplasmic glucans (OPGs). This chain is Glucans biosynthesis glucosyltransferase H, found in Xanthomonas oryzae pv. oryzae (strain MAFF 311018).